The sequence spans 517 residues: Serine hydroxymethyltransferase 2, mitochondrial (517 aa).

A mitochondrion-targeting transit peptide spans 1-31 (MAMASALRRLSSSSNKPLQRLFNGGHLYSMS). Lys-287 is subject to N6-(pyridoxal phosphate)lysine.

This sequence belongs to the SHMT family. Homotetramer. The cofactor is pyridoxal 5'-phosphate.

Its subcellular location is the mitochondrion. The catalysed reaction is (6R)-5,10-methylene-5,6,7,8-tetrahydrofolate + glycine + H2O = (6S)-5,6,7,8-tetrahydrofolate + L-serine. It functions in the pathway one-carbon metabolism; tetrahydrofolate interconversion. Catalyzes the interconversion of serine and glycine. This Flaveria pringlei protein is Serine hydroxymethyltransferase 2, mitochondrial.